The following is a 160-amino-acid chain: Transcriptional repressor NrdR (160 aa).

Positions 1–11 are enriched in polar residues; the sequence is MRCPNCNSLDT. The interval 1–20 is disordered; that stretch reads MRCPNCNSLDTQVKDSRPTE. The segment at 3-34 is a zinc-finger region; that stretch reads CPNCNSLDTQVKDSRPTEDSSVIRRRRVCVAC. The ATP-cone domain maps to 49 to 139; it reads LTVIKRNGRR…VYRNFREAKD (91 aa).

It belongs to the NrdR family. Zn(2+) serves as cofactor.

In terms of biological role, negatively regulates transcription of bacterial ribonucleotide reductase nrd genes and operons by binding to NrdR-boxes. The polypeptide is Transcriptional repressor NrdR (Bradyrhizobium diazoefficiens (strain JCM 10833 / BCRC 13528 / IAM 13628 / NBRC 14792 / USDA 110)).